The chain runs to 303 residues: Large ribosomal subunit protein uL1m (303 aa).

It belongs to the universal ribosomal protein uL1 family. In terms of assembly, component of the mitochondrial large ribosomal subunit (mt-LSU). Mature N.crassa 74S mitochondrial ribosomes consist of a small (37S) and a large (54S) subunit. The 37S small subunit contains a 16S ribosomal RNA (16S mt-rRNA) and 32 different proteins. The 54S large subunit contains a 23S rRNA (23S mt-rRNA) and 42 different proteins.

The protein resides in the mitochondrion. Functionally, component of the mitochondrial ribosome (mitoribosome), a dedicated translation machinery responsible for the synthesis of mitochondrial genome-encoded proteins, including at least some of the essential transmembrane subunits of the mitochondrial respiratory chain. The mitoribosomes are attached to the mitochondrial inner membrane and translation products are cotranslationally integrated into the membrane. This is Large ribosomal subunit protein uL1m (mrpl1) from Neurospora crassa (strain ATCC 24698 / 74-OR23-1A / CBS 708.71 / DSM 1257 / FGSC 987).